A 32-amino-acid polypeptide reads, in one-letter code: MIHMDIVSLAWAALMVVFTFSLSLVVWGRSGL.

The chain crosses the membrane as a helical span at residues 6 to 26 (IVSLAWAALMVVFTFSLSLVV).

The protein belongs to the PetN family. As to quaternary structure, the 4 large subunits of the cytochrome b6-f complex are cytochrome b6, subunit IV (17 kDa polypeptide, PetD), cytochrome f and the Rieske protein, while the 4 small subunits are PetG, PetL, PetM and PetN. The complex functions as a dimer.

It localises to the plastid. It is found in the chloroplast thylakoid membrane. In terms of biological role, component of the cytochrome b6-f complex, which mediates electron transfer between photosystem II (PSII) and photosystem I (PSI), cyclic electron flow around PSI, and state transitions. The polypeptide is Cytochrome b6-f complex subunit 8 (Illicium oligandrum (Star anise)).